The chain runs to 971 residues: Nitrogen regulatory protein areA (971 aa).

Disordered regions lie at residues 39–61 (IHNA…DASA), 146–169 (HKEE…DAGS), 262–307 (QPAH…VNST), 390–416 (SASM…NVST), and 587–691 (DNNG…GNAP). Polar residues predominate over residues 42 to 59 (APTQRTXNSNRIPNSRDA). Positions 146–159 (HKEEQQQRQDEADA) are enriched in basic and acidic residues. 2 stretches are compositionally biased toward polar residues: residues 262–274 (QPAH…SEFN) and 297–307 (FSPQVPAVNST). A compositionally biased stretch (low complexity) spans 390–400 (SASMSNNNNNS). 2 stretches are compositionally biased toward polar residues: residues 597 to 606 (LERSQSQSFR) and 632 to 645 (NGFE…QSSP). 2 stretches are compositionally biased toward low complexity: residues 654-663 (SGFSSVAPSR) and 680-691 (AAAGNGNDGNAP). A GATA-type zinc finger spans residues 694-718 (CTNCFTQTTPLWRRNPEGQPLCNAC). The disordered stretch occupies residues 742-918 (NRGSGTNVPV…PFGSSAGLSS (177 aa)). Residues 744–794 (GSGTNVPVGGSSTRSKKTASTLNSRKNSTLSMSTATANSTKPNSSNPTPRV) are compositionally biased toward polar residues. The segment covering 796-826 (TPPATSQPPSSKDVDSPVSGTTSGANTAGST) has biased composition (low complexity). A compositionally biased stretch (gly residues) spans 832 to 845 (GGPGPSSGAVGGKG). The segment covering 863 to 875 (SSMSMQRPATASS) has biased composition (polar residues). A compositionally biased stretch (low complexity) spans 892–918 (SMDIDSPDSTSSIDGPRPFGSSAGLSS).

The protein resides in the nucleus. Functionally, major nitrogen regulatory protein. Positively acting regulatory gene of nitrogen metabolite repression. The polypeptide is Nitrogen regulatory protein areA (AREA) (Fusarium fujikuroi (Bakanae and foot rot disease fungus)).